The following is a 333-amino-acid chain: Phenylalanine--tRNA ligase alpha subunit (333 aa).

Glu-258 is a binding site for Mg(2+).

Belongs to the class-II aminoacyl-tRNA synthetase family. Phe-tRNA synthetase alpha subunit type 1 subfamily. Tetramer of two alpha and two beta subunits. The cofactor is Mg(2+).

Its subcellular location is the cytoplasm. It carries out the reaction tRNA(Phe) + L-phenylalanine + ATP = L-phenylalanyl-tRNA(Phe) + AMP + diphosphate + H(+). This Wigglesworthia glossinidia brevipalpis protein is Phenylalanine--tRNA ligase alpha subunit.